A 132-amino-acid polypeptide reads, in one-letter code: Agouti-signaling protein (132 aa).

The signal sequence occupies residues Met1–Ser22. N-linked (GlcNAc...) asparagine glycosylation is present at Asn39. The interval Ile62–Pro85 is disordered. A compositionally biased stretch (basic and acidic residues) spans Lys65 to Met79. Disulfide bonds link Cys93–Cys108, Cys100–Cys114, Cys107–Cys125, Cys111–Cys132, and Cys116–Cys123. The region spanning Cys93–Cys132 is the Agouti domain.

Widely expressed at low levels. Highly expressed in the skin. Expressed in adipose tissue.

The protein resides in the secreted. Functionally, involved in the regulation of melanogenesis. The binding of ASP to MC1R precludes alpha-MSH initiated signaling and thus blocks production of cAMP, leading to a down-regulation of eumelanogenesis (brown/black pigment) and thus increasing synthesis of pheomelanin (yellow/red pigment). In higher primates, agouti may affect the quality of hair pigmentation rather than its pattern of deposition. Could well play a role in neuroendocrine aspects of melanocortin action. May have some functional role in regulating the lipid metabolism with adipocytes. This chain is Agouti-signaling protein (ASIP), found in Homo sapiens (Human).